The following is a 96-amino-acid chain: Conantokin-E (96 aa).

A signal peptide spans 1–24; it reads LLVPLVTFHLILGMGTLDHGGALT. Residues 25 to 72 constitute a propeptide that is removed on maturation; that stretch reads ERRSADATALKPEPVLLQKSDARSTDDNDKDRLTQMKRILKKRGNKAR. Positions 28–57 are disordered; sequence SADATALKPEPVLLQKSDARSTDDNDKDRL. Over residues 44 to 57 the composition is skewed to basic and acidic residues; it reads SDARSTDDNDKDRL. Glu-75, Glu-76, Glu-82, Glu-86, and Glu-95 each carry 4-carboxyglutamate. A divalent metal cation is bound by residues Glu-82 and Glu-86. Cys-83 and Cys-96 are disulfide-bonded.

Belongs to the conotoxin B superfamily. Expressed by the venom duct.

It is found in the secreted. Its function is as follows. Conantokins inhibit N-methyl-D-aspartate (NMDA) receptors. This toxin has the highest potency for the NR2B/GRIN2B subunit, followed by NR2A/GRIN2A, NR2C/GRIN2C, and NR2D/GRIN2D subunits. The chain is Conantokin-E from Conus ermineus (Agate cone).